The primary structure comprises 314 residues: DNA-directed RNA polymerase subunit alpha (314 aa).

The tract at residues 1-228 (MIEIEKPRIE…EHLNIFVDLT (228 aa)) is alpha N-terminal domain (alpha-NTD). The tract at residues 245 to 314 (KEKVLEMSIE…DLGLGLRKED (70 aa)) is alpha C-terminal domain (alpha-CTD).

Belongs to the RNA polymerase alpha chain family. In terms of assembly, homodimer. The RNAP catalytic core consists of 2 alpha, 1 beta, 1 beta' and 1 omega subunit. When a sigma factor is associated with the core the holoenzyme is formed, which can initiate transcription.

It catalyses the reaction RNA(n) + a ribonucleoside 5'-triphosphate = RNA(n+1) + diphosphate. Its function is as follows. DNA-dependent RNA polymerase catalyzes the transcription of DNA into RNA using the four ribonucleoside triphosphates as substrates. The polypeptide is DNA-directed RNA polymerase subunit alpha (Macrococcus caseolyticus (strain JCSC5402) (Macrococcoides caseolyticum)).